The chain runs to 282 residues: tRNA (guanine-N(1)-)-methyltransferase (282 aa).

S-adenosyl-L-methionine is bound at residue 145-150 (IGDYVL).

Belongs to the RNA methyltransferase TrmD family. Homodimer.

The protein localises to the cytoplasm. It carries out the reaction guanosine(37) in tRNA + S-adenosyl-L-methionine = N(1)-methylguanosine(37) in tRNA + S-adenosyl-L-homocysteine + H(+). Functionally, specifically methylates guanosine-37 in various tRNAs. The protein is tRNA (guanine-N(1)-)-methyltransferase of Streptomyces avermitilis (strain ATCC 31267 / DSM 46492 / JCM 5070 / NBRC 14893 / NCIMB 12804 / NRRL 8165 / MA-4680).